A 374-amino-acid polypeptide reads, in one-letter code: tRNA-specific 2-thiouridylase MnmA (374 aa).

ATP-binding positions include 12-19 (GMSGGVDS) and methionine 38. The tract at residues 98 to 100 (NPD) is interaction with target base in tRNA. The Nucleophile role is filled by cysteine 103. A disulfide bridge connects residues cysteine 103 and cysteine 202. Residue glycine 128 participates in ATP binding. Residues 152-154 (KDQ) form an interaction with tRNA region. Cysteine 202 functions as the Cysteine persulfide intermediate in the catalytic mechanism. Positions 316 to 317 (RY) are interaction with tRNA.

The protein belongs to the MnmA/TRMU family.

Its subcellular location is the cytoplasm. It carries out the reaction S-sulfanyl-L-cysteinyl-[protein] + uridine(34) in tRNA + AH2 + ATP = 2-thiouridine(34) in tRNA + L-cysteinyl-[protein] + A + AMP + diphosphate + H(+). Catalyzes the 2-thiolation of uridine at the wobble position (U34) of tRNA, leading to the formation of s(2)U34. This chain is tRNA-specific 2-thiouridylase MnmA, found in Vibrio campbellii (strain ATCC BAA-1116).